Here is a 186-residue protein sequence, read N- to C-terminus: Elongation factor P (186 aa).

It belongs to the elongation factor P family.

The protein resides in the cytoplasm. Its pathway is protein biosynthesis; polypeptide chain elongation. Involved in peptide bond synthesis. Stimulates efficient translation and peptide-bond synthesis on native or reconstituted 70S ribosomes in vitro. Probably functions indirectly by altering the affinity of the ribosome for aminoacyl-tRNA, thus increasing their reactivity as acceptors for peptidyl transferase. The protein is Elongation factor P of Ruminiclostridium cellulolyticum (strain ATCC 35319 / DSM 5812 / JCM 6584 / H10) (Clostridium cellulolyticum).